Consider the following 261-residue polypeptide: Auxin-responsive protein IAA10 (261 aa).

Residues 1-43 (MNGLQEVCSSSGSVMIGLPAEEDENAAHSSEDSSCPDESVSET) are disordered. Residues 45-49 (LDLAL) carry the EAR-like (transcriptional repression) motif. The tract at residues 62–90 (LSSSSSSLTRESGTKRSADSSPAAASNAT) is disordered. Residues 80–89 (DSSPAAASNA) show a composition bias toward low complexity. In terms of domain architecture, PB1 spans 151 to 253 (SMLVKVTMDG…SVTRLRIMKT (103 aa)).

This sequence belongs to the Aux/IAA family. As to quaternary structure, homodimers and heterodimers. In terms of tissue distribution, preferentially expressed in vegetative organs.

Its subcellular location is the nucleus. Aux/IAA proteins are short-lived transcriptional factors that function as repressors of early auxin response genes at low auxin concentrations. Repression is thought to result from the interaction with auxin response factors (ARFs), proteins that bind to the auxin-responsive promoter element (AuxRE). Formation of heterodimers with ARF proteins may alter their ability to modulate early auxin response genes expression. This Arabidopsis thaliana (Mouse-ear cress) protein is Auxin-responsive protein IAA10 (IAA10).